Reading from the N-terminus, the 876-residue chain is Valine--tRNA ligase (876 aa).

The short motif at 44–54 is the 'HIGH' region element; the sequence is PNVTGKLHLGH. A 'KMSKS' region motif is present at residues 520 to 524; it reads KMSKS. Position 523 (Lys-523) interacts with ATP. Residues 805–876 adopt a coiled-coil conformation; that stretch reads LEGLIDMDKE…VKARIEQLKA (72 aa).

Belongs to the class-I aminoacyl-tRNA synthetase family. ValS type 1 subfamily. Monomer.

The protein localises to the cytoplasm. The catalysed reaction is tRNA(Val) + L-valine + ATP = L-valyl-tRNA(Val) + AMP + diphosphate. In terms of biological role, catalyzes the attachment of valine to tRNA(Val). As ValRS can inadvertently accommodate and process structurally similar amino acids such as threonine, to avoid such errors, it has a 'posttransfer' editing activity that hydrolyzes mischarged Thr-tRNA(Val) in a tRNA-dependent manner. The chain is Valine--tRNA ligase from Staphylococcus aureus (strain MRSA252).